The sequence spans 295 residues: Bis(5'-nucleosyl)-tetraphosphatase, symmetrical (295 aa).

The tract at residues 271 to 295 (LSIEHPRHTHTPRRKAKKRHKRSPK) is disordered. Basic residues predominate over residues 277–295 (RHTHTPRRKAKKRHKRSPK).

This sequence belongs to the Ap4A hydrolase family.

It carries out the reaction P(1),P(4)-bis(5'-adenosyl) tetraphosphate + H2O = 2 ADP + 2 H(+). In terms of biological role, hydrolyzes diadenosine 5',5'''-P1,P4-tetraphosphate to yield ADP. This chain is Bis(5'-nucleosyl)-tetraphosphatase, symmetrical, found in Xylella fastidiosa (strain M23).